The chain runs to 443 residues: ATP-dependent protease ATPase subunit HslU (443 aa).

Residues I19, 61–66 (GVGKTE), D256, E321, and R393 contribute to the ATP site.

Belongs to the ClpX chaperone family. HslU subfamily. In terms of assembly, a double ring-shaped homohexamer of HslV is capped on each side by a ring-shaped HslU homohexamer. The assembly of the HslU/HslV complex is dependent on binding of ATP.

It is found in the cytoplasm. ATPase subunit of a proteasome-like degradation complex; this subunit has chaperone activity. The binding of ATP and its subsequent hydrolysis by HslU are essential for unfolding of protein substrates subsequently hydrolyzed by HslV. HslU recognizes the N-terminal part of its protein substrates and unfolds these before they are guided to HslV for hydrolysis. This Cupriavidus pinatubonensis (strain JMP 134 / LMG 1197) (Cupriavidus necator (strain JMP 134)) protein is ATP-dependent protease ATPase subunit HslU.